Reading from the N-terminus, the 998-residue chain is MPESIIAGIPVHFPFEPYEVQRAFMEKVIICLRDGTNGVLESPTGTGKTLSLLCSSLAWIRTRQSEQQKQIRKLQDAANNTKVGPTGIVPGEAAELALTVGKANNWGVPKVIYASRTHSQLTQAMRELKRSAYAGMRSVVLGSRDQLCIHPEVMREQGNSNKVNMCKMRVHSKTCSFQLRVESKKDHPDFRGPSIMDIEDLVKVGQKLKMCPYFASKELVNDADITFMPYNYLLDPMARKANKIELSNTIVILDEAHNIEKICEESASVQIKSSDVAVAIEDVTHIMRIFTSADSQDFSGDEPKDFTLDDLTLLKEMLLELEKAIDGVVVDNLAEGTTYPASYMYELLAKANFTYGNCASIVALLDKLVQYLMVASQNNSSMIMRKGGSFLVLAELLTIVFANKEDIMAKVHRSFKVHVEVEEAKQNAGKPAPKQQQQGGWLGKGNNTSNSSSSNKAKVINFWCFNPGFGMEQLLNTQVRSVILTSGTLAPLKPLIAELAIPVAQHLENPHIVDQSQVYVKIIGTGPDRQQLISNFKNRDNPKYISSLGQTILNVSRIVPDGLLVFFPSYPMLNKCVDAWQTSGLWADIAAKKPIFLEPRGKDQFTTTMEEFYQAIRDSKGACFMAVCRGKVSEGLDFADRNGRAVIITGLPYPPLKDPKVILKRRYLEANRTKENQLLTGQEWYNLDATRAVNQAIGRVIRHRHDYGAILLCDSRFQDNSQVQQLSKWIRGHLGARPQCSPFGPIVRELRQFFRHAEETMEQPKERTDEPLLKNVYKTEAVTQENNEEKPLFKVKREPGQMATNAAAFKQANEMAIKVEMTNSIKSWTPDDYVSAAGRTQSHSQSKPPNAMDFMSRLDSNVSSIDFNSTGTGNLVKIHKRERSSPTFGDTKSSSQLKKRYKLVDNIKTEPSTSSSCKAPESRADFLREVRCFINQDEFRDFGKALLAYKNGGDEAFESLMSLLFKLLGKPQMRYLLLGIRRYLKNEHKAEFDKRVAT.

Positions 7 to 324 (AGIPVHFPFE…KEMLLELEKA (318 aa)) constitute a Helicase ATP-binding domain. 42-49 (SPTGTGKT) contributes to the ATP binding site. 4 residues coordinate [4Fe-4S] cluster: cysteine 148, cysteine 166, cysteine 175, and cysteine 211. The DEAH box signature appears at 254-257 (DEAH). Residues 426–454 (QNAGKPAPKQQQQGGWLGKGNNTSNSSSS) form a disordered region. Residue threonine 887 is modified to Phosphothreonine.

This sequence belongs to the helicase family. RAD3/XPD subfamily.

The protein resides in the nucleus. It catalyses the reaction ATP + H2O = ADP + phosphate + H(+). Functionally, a probable ATP-dependent DNA helicase implicated in DNA repair and the maintenance of genomic stability. Acts as an anti-recombinase to counteract toxic recombination and limit crossover during meiosis. Regulates meiotic recombination and crossover homeostasis by physically dissociating strand invasion events and thereby promotes noncrossover repair by meiotic synthesis dependent strand annealing (SDSA) as well as disassembly of D loop recombination intermediates. The chain is Regulator of telomere elongation helicase 1 homolog from Drosophila willistoni (Fruit fly).